The following is a 326-amino-acid chain: Adenosine receptor A1 (326 aa).

Topologically, residues 1–10 (MPPSISAFQA) are extracellular. Residues 11-33 (AYIGIEVLIALVSVPGNVLVIWA) form a helical membrane-spanning segment. Topologically, residues 34 to 46 (VKVNQALRDATFC) are cytoplasmic. A helical membrane pass occupies residues 47–69 (FIVSLAVADVAVGALVIPLAILI). At 70–80 (NIGPRTYFHTC) the chain is on the extracellular side. An intrachain disulfide couples Cys80 to Cys169. A helical transmembrane segment spans residues 81–102 (LKVACPVLILTQSSILALLAIA). The Cytoplasmic portion of the chain corresponds to 103–123 (VDRYLRVKIPLRYKTVVTPRR). The helical transmembrane segment at 124–146 (AVVAITGCWILSFVVGLTPMFGW) threads the bilayer. Over 147-176 (NNLSAVERDWLANGSVGEPVIECQFEKVIS) the chain is Extracellular. N-linked (GlcNAc...) asparagine glycans are attached at residues Asn148 and Asn159. The chain crosses the membrane as a helical span at residues 177–201 (MEYMVYFNFFVWVLPPLLLMVLIYM). Residues 202–235 (EVFYLIRKQLNKKVSASSGDPQKYYGKELKIAKS) are Cytoplasmic-facing. A helical membrane pass occupies residues 236-259 (LALILFLFALSWLPLHILNCITLF). Residues 260-267 (CPSCHMPR) lie on the Extracellular side of the membrane. The chain crosses the membrane as a helical span at residues 268–292 (ILIYIAIFLSHGNSAMNPIVYAFRI). The Cytoplasmic portion of the chain corresponds to 293-326 (QKFRVTFLKIWNDHFRCQPAPPVDEDAPAERPDD). Cys309 carries the S-palmitoyl cysteine lipid modification.

It belongs to the G-protein coupled receptor 1 family.

It is found in the cell membrane. Receptor for adenosine. The activity of this receptor is mediated by G proteins which inhibit adenylyl cyclase. The protein is Adenosine receptor A1 (ADORA1) of Bos taurus (Bovine).